Consider the following 181-residue polypeptide: Der GTPase-activating protein YihI (181 aa).

2 disordered regions span residues 1-75 (MSRK…KKIP) and 145-181 (EPEA…DYKG). Residues 32–43 (RLRKKDKKRKGL) show a composition bias toward basic residues. The segment covering 146 to 155 (PEAEEEFEDE) has biased composition (acidic residues). The span at 156-165 (APVRKSRSDD) shows a compositional bias: basic and acidic residues. A compositionally biased stretch (acidic residues) spans 166-181 (DLLADFEDFDMDDYKG).

The protein belongs to the YihI family. As to quaternary structure, interacts with Der.

Its function is as follows. A GTPase-activating protein (GAP) that modifies Der/EngA GTPase function. May play a role in ribosome biogenesis. The chain is Der GTPase-activating protein YihI from Vibrio vulnificus (strain YJ016).